The primary structure comprises 801 residues: Phenylalanine--tRNA ligase beta subunit (801 aa).

The 115-residue stretch at 39–153 (AEGLSKLVVG…EGAIPGDSIF (115 aa)) folds into the tRNA-binding domain. The B5 domain maps to 406–481 (TEPVEVSTTL…RIYGYEKLPT (76 aa)). Mg(2+)-binding residues include Asp-459, Asp-465, Glu-468, and Glu-469. One can recognise an FDX-ACB domain in the interval 708–801 (TKYPSVSRDI…LVEKVNAEIR (94 aa)).

Belongs to the phenylalanyl-tRNA synthetase beta subunit family. Type 1 subfamily. Tetramer of two alpha and two beta subunits. Mg(2+) is required as a cofactor.

It localises to the cytoplasm. It carries out the reaction tRNA(Phe) + L-phenylalanine + ATP = L-phenylalanyl-tRNA(Phe) + AMP + diphosphate + H(+). The polypeptide is Phenylalanine--tRNA ligase beta subunit (Streptococcus agalactiae serotype Ia (strain ATCC 27591 / A909 / CDC SS700)).